Here is a 256-residue protein sequence, read N- to C-terminus: uncharacterized protein (256 aa).

An HTH deoR-type domain is found at 7–62 (PAERQKTLLNLISKQSVISINNLVNILGVSHMTVRRDIQKLEEDGKVISVSGGVQL). The segment at residues 24–43 (ISINNLVNILGVSHMTVRRD) is a DNA-binding region (H-T-H motif).

This is an uncharacterized protein from Haemophilus influenzae (strain ATCC 51907 / DSM 11121 / KW20 / Rd).